The chain runs to 363 residues: Chorismate synthase (363 aa).

The tract at residues 44–63 (DLDRRKPGTSRHTTQRQEPD) is disordered. NADP(+) is bound by residues R48 and R54. FMN contacts are provided by residues 125-127 (RSS), 237-238 (NA), G277, 292-296 (KATSS), and R318.

It belongs to the chorismate synthase family. As to quaternary structure, homotetramer. It depends on FMNH2 as a cofactor.

It carries out the reaction 5-O-(1-carboxyvinyl)-3-phosphoshikimate = chorismate + phosphate. It participates in metabolic intermediate biosynthesis; chorismate biosynthesis; chorismate from D-erythrose 4-phosphate and phosphoenolpyruvate: step 7/7. Functionally, catalyzes the anti-1,4-elimination of the C-3 phosphate and the C-6 proR hydrogen from 5-enolpyruvylshikimate-3-phosphate (EPSP) to yield chorismate, which is the branch point compound that serves as the starting substrate for the three terminal pathways of aromatic amino acid biosynthesis. This reaction introduces a second double bond into the aromatic ring system. The protein is Chorismate synthase of Pseudomonas fluorescens (strain SBW25).